The following is a 575-amino-acid chain: Sialate:O-sulfotransferase 1 (575 aa).

The Cytoplasmic segment spans residues 1–14; sequence MAKPFFRLQKFLRR. Residues 15–35 traverse the membrane as a helical; Signal-anchor for type II membrane protein segment; the sequence is TQFLLFFLTAAYLMTGSLLLL. At 36 to 575 the chain is on the extracellular side; the sequence is QRVRVALPQG…TGLPREYVPR (540 aa). 2 consecutive WSC domains span residues 142 to 234 and 245 to 340; these read RGTY…YRVD and TATY…DTRC. N-linked (GlcNAc...) asparagine glycosylation is found at Asn-257 and Asn-348.

It belongs to the WSCD family.

It is found in the golgi apparatus membrane. It catalyses the reaction a ganglioside GM1b + 3'-phosphoadenylyl sulfate = an 8-O-sulfo-ganglioside GM1b + adenosine 3',5'-bisphosphate + H(+). Functionally, sialate:O-sulfotransferase which catalyzes 8-O-sulfation at the Sia-glycan level using 3'-phosphoadenosine 5'-phosphosulfate (PAPS) as a donor, forming 8-O-sulfated Sia (Sia8S)-glycans. Displays selectivity toward glycolipids such as GM1 gangliosides. This Homo sapiens (Human) protein is Sialate:O-sulfotransferase 1 (WSCD1).